The primary structure comprises 100 residues: uncharacterized protein (100 aa).

Residues 13–32 (IWSSLNIICLMVTFLNVQLS) form a helical membrane-spanning segment.

The protein localises to the mitochondrion membrane. This is an uncharacterized protein from Schizosaccharomyces pombe (strain 972 / ATCC 24843) (Fission yeast).